Consider the following 504-residue polypeptide: Pre-mRNA-processing factor 19 (504 aa).

Residue S2 is modified to N-acetylserine. A U-box domain is found at 2–73 (SLICSISNEV…KPPSATSIPA (72 aa)). The interval 68 to 223 (ATSIPAILKA…VGLHSASIPG (156 aa)) is may mediate interaction with PSMC5. 4 positions are modified to N6-acetyllysine: K122, K179, K244, and K261. One copy of the WD 1 repeat lies at 219 to 259 (ASIPGILALDLCPSDTNKILTGGADKNVVVFDKSSEQILAT). WD repeat units lie at residues 262 to 301 (GHTKKVTSVVFHPSQDLVFSASPDATIRIWSVPNASCVQV), 304 to 345 (AHES…TKVT), 348 to 387 (TSGCSLTCAQFHPDGLIFGTGTMDSQIKIWDLKERTNVAN), 390 to 429 (GHSGPITSIAFSENGYYLATAADDSSVKLWDLRKLKNFKT), 433 to 472 (DNNFEVKSLIFDQSGTYLALGGTDVQIYICKQWTEILHFT), and 473 to 503 (EHSGLTTGVAFGHHAKFIASTGMDRSLKFYS).

This sequence belongs to the WD repeat PRP19 family. In terms of assembly, homotetramer. Component of activated, catalytic and post-catalytic spliceosomes. Component of the Prp19 complex/PRP19C/Nineteen complex/NTC and related complexes described as PRP19-CDC5L splicing complex and PSO4 complex. A homotetramer of PRPF19, CDC5L, PLRG1 and BCAS2 constitute the core of those complexes. The interaction with CDC5L, PLRG1 and BCAS2 is direct within this core complex. At least three less stably associated proteins CTNNBL1, CWC15 and HSPA8 are found in the Prp19 complex. The Prp19 complex associates with the spliceosome during its assembly and remodeling recruiting additional proteins. Component of the XAB2 complex, a multimeric protein complex composed of XAB2, PRPF19, AQR, ZNF830, ISY1, and PPIE. Interacts with CWC22 and EIF4A3 in an RNA-independent manner. Interacts with RPA1 and RPA2; the PRP19-CDC5L complex is recruited to the sites of DNA repair where it interacts with the replication protein A complex (RPA). Interacts with SETMAR; required for SETMAR recruitment to site of DNA damage. Interacts with U2AF2; the interaction is direct and recruits the Prp19 complex to RNA polymerase II C-terminal domain (CTD) and the pre-mRNA. Interacts with PRPF3. Interacts with APEX1, DNTT and PSMB4. Interacts with PSMC5. Interacts with KNSTRN. Interacts (via N-terminus) with CDC5L. Interacts with KHDC4. Interacts with USB1. Interacts with DDX41. In terms of tissue distribution, ubiquitous. Weakly expressed in senescent cells of different tissue origins. Highly expressed in tumor cell lines.

The protein localises to the nucleus. The protein resides in the nucleoplasm. It is found in the cytoplasm. It localises to the cytoskeleton. Its subcellular location is the spindle. The protein localises to the lipid droplet. It carries out the reaction S-ubiquitinyl-[E2 ubiquitin-conjugating enzyme]-L-cysteine + [acceptor protein]-L-lysine = [E2 ubiquitin-conjugating enzyme]-L-cysteine + N(6)-ubiquitinyl-[acceptor protein]-L-lysine.. It participates in protein modification; protein ubiquitination. In terms of biological role, ubiquitin-protein ligase which is a core component of several complexes mainly involved pre-mRNA splicing and DNA repair. Required for pre-mRNA splicing as component of the spliceosome. Core component of the PRP19C/Prp19 complex/NTC/Nineteen complex which is part of the spliceosome and participates in its assembly, its remodeling and is required for its activity. During assembly of the spliceosome, mediates 'Lys-63'-linked polyubiquitination of the U4 spliceosomal protein PRPF3. Ubiquitination of PRPF3 allows its recognition by the U5 component PRPF8 and stabilizes the U4/U5/U6 tri-snRNP spliceosomal complex. Recruited to RNA polymerase II C-terminal domain (CTD) and the pre-mRNA, it may also couple the transcriptional and spliceosomal machineries. The XAB2 complex, which contains PRPF19, is also involved in pre-mRNA splicing, transcription and transcription-coupled repair. Beside its role in pre-mRNA splicing PRPF19, as part of the PRP19-CDC5L complex, plays a role in the DNA damage response/DDR. It is recruited to the sites of DNA damage by the RPA complex where PRPF19 directly ubiquitinates RPA1 and RPA2. 'Lys-63'-linked polyubiquitination of the RPA complex allows the recruitment of the ATR-ATRIP complex and the activation of ATR, a master regulator of the DNA damage response. May also play a role in DNA double-strand break (DSB) repair by recruiting the repair factor SETMAR to altered DNA. As part of the PSO4 complex may also be involved in the DNA interstrand cross-links/ICLs repair process. In addition, may also mediate 'Lys-48'-linked polyubiquitination of substrates and play a role in proteasomal degradation. May play a role in the biogenesis of lipid droplets. May play a role in neural differentiation possibly through its function as part of the spliceosome. The protein is Pre-mRNA-processing factor 19 of Homo sapiens (Human).